The primary structure comprises 380 residues: Geranylgeranyl pyrophosphate synthase cle6 (380 aa).

Positions 1–19 are enriched in low complexity; sequence MHSVRTSTTSTSSMVSSTM. The disordered stretch occupies residues 1-55; that stretch reads MHSVRTSTTSTSSMVSSTMHPFDAFNAPQPYQQHHPPRWNIHNPHFSQTNGHSIQ. The segment covering 45 to 55 has biased composition (polar residues); it reads HFSQTNGHSIQ. Isopentenyl diphosphate is bound by residues K102, R105, and H134. Mg(2+) is bound by residues D141 and D145. R150 lines the dimethylallyl diphosphate pocket. R151 contacts isopentenyl diphosphate. Positions 229, 230, and 263 each coordinate dimethylallyl diphosphate. D266 lines the Mg(2+) pocket. Residues N270, K280, and K290 each contribute to the dimethylallyl diphosphate site.

This sequence belongs to the FPP/GGPP synthase family. The cofactor is Mg(2+).

It catalyses the reaction isopentenyl diphosphate + dimethylallyl diphosphate = (2E)-geranyl diphosphate + diphosphate. It carries out the reaction isopentenyl diphosphate + (2E)-geranyl diphosphate = (2E,6E)-farnesyl diphosphate + diphosphate. The catalysed reaction is isopentenyl diphosphate + (2E,6E)-farnesyl diphosphate = (2E,6E,10E)-geranylgeranyl diphosphate + diphosphate. Its pathway is secondary metabolite biosynthesis; terpenoid biosynthesis. Its function is as follows. Geranylgeranyl pyrophosphate synthase; part of the cluster A that mediates the biosynthesis of chevalone E and its oxidized derivatives that possess a unique five-membered lactone ring and can synergistically enhance the cytotoxicity of doxorubicin (DOX) in breast cancer cells. Within the pathway, cle6 takes part to the biosynthesis of the molecular scaffold by providing geranylgeranyl pyrophosphate (GGPP) to the prenyltransferase cle5 for C-3 geranylgeranylation of triacetic acid lactone. The molecular scaffold is commonly biosynthesized by a series of enzymes including the non-reducing polyketide synthase (NR-PKS) cle1 that produces the alpha-pyrone triacetic acid lactone (TAL); The membrane-bound prenyltransferase cle5 that accepts TAL as its substrate to perform a C-3 geranylgeranylation reaction, in which the pathway-dedicated GGPS cle6 is required to provide GGPP, the other substrate of cle5; the FAD-dependent monooxygenase Cle3 that forms an (S)-epoxide ring at the terminal olefin of the geranylgeranyl group; and the terpene cyclase Cle7 that catalyzes the cyclization of the prenyl group that yields the pentacyclic pathway intermediate chevalone E. Chevalone E can derivatize into seven new oxidized analogs by the cytochrome P450 monooxygenases cle2 (acting at C-20) and cle4 (acting at C-11 and C-12). The chain is Geranylgeranyl pyrophosphate synthase cle6 from Aspergillus versicolor.